The primary structure comprises 171 residues: 3-hydroxydecanoyl-[acyl-carrier-protein] dehydratase (171 aa).

Residue H70 is part of the active site.

It belongs to the thioester dehydratase family. FabA subfamily. Homodimer.

It is found in the cytoplasm. It carries out the reaction a (3R)-hydroxyacyl-[ACP] = a (2E)-enoyl-[ACP] + H2O. The enzyme catalyses (3R)-hydroxydecanoyl-[ACP] = (2E)-decenoyl-[ACP] + H2O. The catalysed reaction is (2E)-decenoyl-[ACP] = (3Z)-decenoyl-[ACP]. The protein operates within lipid metabolism; fatty acid biosynthesis. Its function is as follows. Necessary for the introduction of cis unsaturation into fatty acids. Catalyzes the dehydration of (3R)-3-hydroxydecanoyl-ACP to E-(2)-decenoyl-ACP and then its isomerization to Z-(3)-decenoyl-ACP. Can catalyze the dehydratase reaction for beta-hydroxyacyl-ACPs with saturated chain lengths up to 16:0, being most active on intermediate chain length. The polypeptide is 3-hydroxydecanoyl-[acyl-carrier-protein] dehydratase (Shewanella baltica (strain OS223)).